We begin with the raw amino-acid sequence, 387 residues long: Paralemmin-1 (387 aa).

Residue Met1 is modified to N-acetylmethionine. The stretch at 7–104 forms a coiled coil; that stretch reads ETISQQERLQ…IEELENADTL (98 aa). Disordered stretches follow at residues 22-78 and 98-133; these read RRRQ…QEDE and LENADTLPAPVKETQVAPSPGPVVPAPCPAQEDRKA. 2 stretches are compositionally biased toward basic and acidic residues: residues 25 to 41 and 69 to 78; these read QAEVENRRRQLEDDRRQ and DMRKQMQEDE. Ser116 is subject to Phosphoserine. Over residues 116-125 the composition is skewed to pro residues; that stretch reads SPGPVVPAPC. 2 positions are modified to phosphothreonine: Thr142 and Thr146. The residue at position 163 (Ser163) is a Phosphoserine. A Phosphothreonine modification is found at Thr244. Ser246 bears the Phosphoserine mark. Disordered stretches follow at residues 246–297 and 334–378; these read SEAG…QEPP and AAEP…DMKK. Over residues 258–273 the composition is skewed to basic and acidic residues; the sequence is GPSEEVVRTTPSRREI. The span at 286 to 297 shows a compositional bias: low complexity; the sequence is GPPGIQPGQEPP. 2 positions are modified to phosphoserine: Ser346 and Ser369. S-palmitoyl cysteine attachment occurs at residues Cys381 and Cys383. Position 384 is a cysteine methyl ester (Cys384). The S-farnesyl cysteine moiety is linked to residue Cys384. A propeptide spans 385-387 (removed in mature form); that stretch reads SIM.

It belongs to the paralemmin family. In terms of assembly, interacts with dopamine receptor DRD3. In terms of processing, phosphorylated.

The protein resides in the cell membrane. Its subcellular location is the cell projection. It localises to the filopodium membrane. It is found in the axon. The protein localises to the dendrite. The protein resides in the dendritic spine. Its subcellular location is the basolateral cell membrane. It localises to the apicolateral cell membrane. Involved in plasma membrane dynamics and cell process formation. Necessary for axonal and dendritic filopodia induction, for dendritic spine maturation and synapse formation in a palmitoylation-dependent manner. This is Paralemmin-1 (PALM) from Sus scrofa (Pig).